Here is a 1145-residue protein sequence, read N- to C-terminus: Protocadherin-19 (1145 aa).

The N-terminal stretch at 1–21 is a signal peptide; the sequence is MESLLLPVLLLLAVLWTQAAA. Cadherin domains follow at residues 22 to 129, 130 to 238, 239 to 346, 350 to 453, 454 to 563, and 569 to 672; these read LINL…APSF, PAAQ…NPVF, GEST…PPII, SVNS…HPHF, SKPY…TPVI, and INGT…QESM. The Extracellular segment spans residues 22–678; it reads LINLKYSVEE…QESMGSVNLS (657 aa). 4 residues coordinate Ca(2+): Glu-31, Glu-32, Asp-88, and Asp-90. A disulfide bridge links Cys-93 with Cys-99. Ca(2+) is bound by residues Asp-121, Asn-123, Asp-124, Asn-125, Glu-140, Asp-155, Asp-157, Glu-199, Asp-212, Asp-230, Ser-231, Asn-232, Asp-233, Asn-234, and Glu-249. Asn-261 is a glycosylation site (N-linked (GlcNAc...) asparagine). Ca(2+) contacts are provided by Asp-264, Asp-266, Asn-270, Asp-305, Glu-307, Asp-338, Asn-340, Asp-341, Asn-342, Glu-360, Asp-375, Asp-377, Asn-381, Asp-412, and Glu-414. Asn-420 carries an N-linked (GlcNAc...) asparagine glycan. Ca(2+) contacts are provided by Asp-427, Asp-445, Glu-446, Asn-447, Asp-448, Asn-449, Glu-464, Asp-479, Asp-481, Asn-485, Asn-522, Glu-524, and Asp-537. Asn-485 carries N-linked (GlcNAc...) asparagine glycosylation. Asn-546 is a glycosylation site (N-linked (GlcNAc...) asparagine). 5 residues coordinate Ca(2+): Asp-555, Val-556, Asn-557, Asp-558, and Asn-559. Residue Asn-570 is glycosylated (N-linked (GlcNAc...) asparagine). Ca(2+) is bound by residues Asp-594, Asp-596, Asn-600, and Asp-646. Asn-676 carries an N-linked (GlcNAc...) asparagine glycan. The helical transmembrane segment at 679–699 threads the bilayer; sequence LIFIIALGSIAGILFVTMIFV. At 700 to 1145 the chain is on the cytoplasmic side; the sequence is AIKCKRDNKE…SVKRLKDIVL (446 aa). Disordered stretches follow at residues 901 to 921 and 1094 to 1145; these read GNSLKDSGHEESDQTDSEHDV and LEHH…DIVL. 2 stretches are compositionally biased toward basic and acidic residues: residues 906 to 921 and 1106 to 1145; these read DSGHEESDQTDSEHDV and SEAEPRGADNEKVMHEVNPIRKDGRDKESPSVKRLKDIVL.

Homodimer; antiparallel.

It is found in the cell membrane. Functionally, calcium-dependent cell-adhesion protein. This chain is Protocadherin-19 (Pcdh19), found in Mus musculus (Mouse).